Consider the following 492-residue polypeptide: UPF0652 protein C22H10.08 (492 aa).

It belongs to the UPF0652 family.

It is found in the cytoplasm. Its subcellular location is the nucleus. This is UPF0652 protein C22H10.08 from Schizosaccharomyces pombe (strain 972 / ATCC 24843) (Fission yeast).